A 154-amino-acid chain; its full sequence is Phosphopantetheine adenylyltransferase (154 aa).

This sequence belongs to the eukaryotic CoaD family.

Its subcellular location is the cytoplasm. It catalyses the reaction (R)-4'-phosphopantetheine + ATP + H(+) = 3'-dephospho-CoA + diphosphate. It participates in cofactor biosynthesis; coenzyme A biosynthesis. In terms of biological role, reversibly transfers an adenylyl group from ATP to 4'-phosphopantetheine, yielding dephospho-CoA (dPCoA) and pyrophosphate. This is Phosphopantetheine adenylyltransferase from Methanosarcina mazei (strain ATCC BAA-159 / DSM 3647 / Goe1 / Go1 / JCM 11833 / OCM 88) (Methanosarcina frisia).